We begin with the raw amino-acid sequence, 361 residues long: Phospho-N-acetylmuramoyl-pentapeptide-transferase (361 aa).

The next 10 membrane-spanning stretches (helical) occupy residues 25-45, 73-93, 97-117, 134-154, 168-188, 200-220, 237-257, 264-284, 289-309, and 338-358; these read RAVLAALTALTISFIVGPAVI, TMGGALILVSVAVTTLLWADL, YVWLALMTLLGFGVIGWVDDW, YFWQSAIGLVVAVYLWQTASL, ATFGLSAAAFIALTYFVIVGA, GLAILPTVMVASALAIFAYVA, AGELAIFCAAMAGAGLAFLWF, VFMGDVGALALGAALGVVAVV, IILFIMCGVFVMETLSVMIQV, and QVVVRFWIISMMLVLIGLSSL.

It belongs to the glycosyltransferase 4 family. MraY subfamily. The cofactor is Mg(2+).

Its subcellular location is the cell inner membrane. It catalyses the reaction UDP-N-acetyl-alpha-D-muramoyl-L-alanyl-gamma-D-glutamyl-meso-2,6-diaminopimeloyl-D-alanyl-D-alanine + di-trans,octa-cis-undecaprenyl phosphate = di-trans,octa-cis-undecaprenyl diphospho-N-acetyl-alpha-D-muramoyl-L-alanyl-D-glutamyl-meso-2,6-diaminopimeloyl-D-alanyl-D-alanine + UMP. It participates in cell wall biogenesis; peptidoglycan biosynthesis. In terms of biological role, catalyzes the initial step of the lipid cycle reactions in the biosynthesis of the cell wall peptidoglycan: transfers peptidoglycan precursor phospho-MurNAc-pentapeptide from UDP-MurNAc-pentapeptide onto the lipid carrier undecaprenyl phosphate, yielding undecaprenyl-pyrophosphoryl-MurNAc-pentapeptide, known as lipid I. This is Phospho-N-acetylmuramoyl-pentapeptide-transferase from Thiobacillus denitrificans (strain ATCC 25259 / T1).